A 365-amino-acid polypeptide reads, in one-letter code: Ribosomal RNA large subunit methyltransferase M (365 aa).

Residues S187, 220–223, D239, D259, and D276 contribute to the S-adenosyl-L-methionine site; that span reads CPGG. The active-site Proton acceptor is the K305.

Belongs to the class I-like SAM-binding methyltransferase superfamily. RNA methyltransferase RlmE family. RlmM subfamily. In terms of assembly, monomer.

It is found in the cytoplasm. The catalysed reaction is cytidine(2498) in 23S rRNA + S-adenosyl-L-methionine = 2'-O-methylcytidine(2498) in 23S rRNA + S-adenosyl-L-homocysteine + H(+). In terms of biological role, catalyzes the 2'-O-methylation at nucleotide C2498 in 23S rRNA. The chain is Ribosomal RNA large subunit methyltransferase M from Psychromonas ingrahamii (strain DSM 17664 / CCUG 51855 / 37).